We begin with the raw amino-acid sequence, 128 residues long: UPF0102 protein GSU0650 (128 aa).

This sequence belongs to the UPF0102 family.

The polypeptide is UPF0102 protein GSU0650 (Geobacter sulfurreducens (strain ATCC 51573 / DSM 12127 / PCA)).